Here is a 144-residue protein sequence, read N- to C-terminus: uncharacterized protein (144 aa).

The HTH lysR-type domain occupies methionine 1 to threonine 58. The H-T-H motif DNA-binding region spans phenylalanine 18–alanine 38.

This sequence belongs to the LysR transcriptional regulatory family.

This is an uncharacterized protein from Azotobacter vinelandii.